The chain runs to 597 residues: Alpha-1,2-mannosyltransferase MNN2 (597 aa).

The Cytoplasmic segment spans residues 1 to 12; sequence MLLTKRFSKLFK. A helical; Signal-anchor for type II membrane protein membrane pass occupies residues 13-28; it reads LTFIVLILCGLFVITN. The Extracellular portion of the chain corresponds to 29-597; sequence KYMDENTSVK…STHDKAIAGK (569 aa). Residues N34, N363, and N473 are each glycosylated (N-linked (GlcNAc...) asparagine).

The protein belongs to the MNN1/MNT family. In terms of assembly, interacts with SVP26.

It localises to the golgi apparatus membrane. It functions in the pathway protein modification; protein glycosylation. Alpha-1,2-mannosyltransferase, responsible for addition of the first alpha-1,2-linked mannose to form the branches on the mannan backbone of oligosaccharides. The polypeptide is Alpha-1,2-mannosyltransferase MNN2 (MNN2) (Saccharomyces cerevisiae (strain ATCC 204508 / S288c) (Baker's yeast)).